A 563-amino-acid polypeptide reads, in one-letter code: MEKSTMSAILLVLHLFVLLLQYSEVHSLATTSNHDFSYLRFAYDATDLELEGSYDYVIVGGGTSGCPLAATLSEKYKVLVLERGSLPTAYPNVLTADGFVYNLQQEDDGKTPVERFVSEDGIDNVRGRVLGGTSMINAGVYARANTSIYSASGVDWDMDLVNKTYEWVEDTIVFKPNYQPWQSVTGTAFLEAGVDPNHGFSLDHEAGTRITGSTFDNKGTRHAADELLNKGNSNNLRVGVHASVEKIIFSNAPGLTATGVIYRDSNGTPHRAFVRSKGEVIVSAGTIGTPQLLLLSGVGPESYLSSLNIPVVLSHPYVGQFLHDNPRNFINILPPNPIEPTIVTVLGISNDFYQCSFSSLPFTTPPFSFFPSTSYPLPNSTFAHFASKVAGPLSYGSLTLKSSSNVRVSPNVKFNYYSNPTDLSHCVSGMKKIGELLSTDALKPYKVEDLPGIEGFNILGIPLPKDQTDDAAFETFCRESVASYWHYHGGCLVGKVLDGDFRVTGIDALRVVDGSTFPYTPASHPQGFYLMLGRYVGIKILQERSASDLKILDSLKSAASLVL.

Positions 1–27 (MEKSTMSAILLVLHLFVLLLQYSEVHS) are cleaved as a signal peptide. FAD contacts are provided by residues 63–64 (TS), 82–83 (ER), V129, T133, and 137–140 (NAGV). Residues N145 and N162 are each glycosylated (N-linked (GlcNAc...) asparagine). Residue V244 coordinates FAD. C355 is a binding site for substrate. Residue N379 is glycosylated (N-linked (GlcNAc...) asparagine). Cysteines 426 and 477 form a disulfide. Residue Y484 participates in substrate binding. FAD is bound by residues 485–486 (WH) and G514. H486 (proton donor) is an active-site residue. H524 (proton acceptor) is an active-site residue. 525–526 (PQ) serves as a coordination point for FAD.

Belongs to the GMC oxidoreductase family. As to quaternary structure, monomer. The cofactor is FAD. Post-translationally, glycosylated. In terms of tissue distribution, seeds. Localized within cotyledonary parenchyma cells.

The protein resides in the vacuole. It is found in the aleurone grain. The catalysed reaction is (R)-mandelonitrile = benzaldehyde + hydrogen cyanide. Involved in cyanogenesis, the release of HCN from injured tissues. Catalyzes the stereospecific addition of HCN to a variety of aldehydes in vitro. It is a major seed constituent, and could have the additional role of a storage form for reduced nitrogen. In Prunus serotina (Black cherry), this protein is (R)-mandelonitrile lyase 1 (MDL1).